A 553-amino-acid chain; its full sequence is Arginine--tRNA ligase (553 aa).

A 'HIGH' region motif is present at residues 130–140 (ANPTGPIHLGG).

The protein belongs to the class-I aminoacyl-tRNA synthetase family. In terms of assembly, monomer.

Its subcellular location is the cytoplasm. The catalysed reaction is tRNA(Arg) + L-arginine + ATP = L-arginyl-tRNA(Arg) + AMP + diphosphate. This chain is Arginine--tRNA ligase, found in Corynebacterium aurimucosum (strain ATCC 700975 / DSM 44827 / CIP 107346 / CN-1) (Corynebacterium nigricans).